Consider the following 517-residue polypeptide: Cytochrome P450 CYP72A616 (517 aa).

A helical membrane pass occupies residues 5–25 (VLGALAALLAAAAAWVMRAAA). Cys465 contributes to the heme binding site.

The protein belongs to the cytochrome P450 family. In terms of tissue distribution, mainly expressed in leaves and, at low levels, in roots, fruits and stems.

The protein resides in the membrane. The protein operates within steroid metabolism; cholesterol metabolism. In terms of biological role, involved in the biosynthesis of spiroketal steroid and saponin natural products from cholesterol such as diosgenin and analogs (e.g. furostanol and spirostanol), plant defense compounds used as main precursors for the industrial production of steroid hormones. During the 5,6-spiroketalization of cholesterol, may catalyze the 27-monohydroxylation of furostanol-type steroid to an intermediate product that undergoes a stereospecific formation of the terminal heterocycle to yield diosgenin. In Paris polyphylla (Daiswa polyphylla), this protein is Cytochrome P450 CYP72A616.